A 278-amino-acid chain; its full sequence is Energy-coupling factor transporter ATP-binding protein EcfA (278 aa).

In terms of domain architecture, ABC transporter spans 5–240 (LETKNLVYNY…KEVIDEADLR (236 aa)). 38 to 45 (GHNGAGKS) is a binding site for ATP.

Belongs to the ABC transporter superfamily. Energy-coupling factor EcfA family. In terms of assembly, forms a stable energy-coupling factor (ECF) transporter complex composed of 2 membrane-embedded substrate-binding proteins (S component), 2 ATP-binding proteins (A component) and 2 transmembrane proteins (T component).

The protein resides in the cell membrane. ATP-binding (A) component of a common energy-coupling factor (ECF) ABC-transporter complex. Unlike classic ABC transporters this ECF transporter provides the energy necessary to transport a number of different substrates. The sequence is that of Energy-coupling factor transporter ATP-binding protein EcfA from Methanosphaera stadtmanae (strain ATCC 43021 / DSM 3091 / JCM 11832 / MCB-3).